An 871-amino-acid chain; its full sequence is Probable inorganic carbon transporter subunit DabA (871 aa).

4 residues coordinate Zn(2+): cysteine 396, aspartate 398, histidine 577, and cysteine 592.

It belongs to the inorganic carbon transporter (TC 9.A.2) DabA family. Forms a complex with DabB. It depends on Zn(2+) as a cofactor.

The protein localises to the cell membrane. Part of an energy-coupled inorganic carbon pump. The polypeptide is Probable inorganic carbon transporter subunit DabA (Bacillus subtilis (strain 168)).